A 101-amino-acid polypeptide reads, in one-letter code: Thioredoxin 1 (101 aa).

In terms of domain architecture, Thioredoxin spans 2 to 101; sequence AQTLDDLIRT…MRQEVLKAIG (100 aa). Cysteine 25 and cysteine 28 are disulfide-bonded.

The protein belongs to the thioredoxin family.

Participates in various redox reactions through the reversible oxidation of its active center dithiol to a disulfide and catalyzes dithiol-disulfide exchange reactions. The protein is Thioredoxin 1 (trx1) of Chlorobaculum tepidum (strain ATCC 49652 / DSM 12025 / NBRC 103806 / TLS) (Chlorobium tepidum).